We begin with the raw amino-acid sequence, 220 residues long: Putative GED domain-containing protein DNM1P46 (220 aa).

The segment at 18–46 (VSVETRNVKPQGKDSKAEENGSHSFMHSM) is disordered. A compositionally biased stretch (basic and acidic residues) spans 28-38 (QGKDSKAEENG). Positions 54 to 149 (METTQNLVDS…CCPTCTRLGT (96 aa)) constitute a GED domain. Residues 173-194 (DTPGGVGRAGTAARRDSRGNEK) form a disordered region. The span at 185–194 (ARRDSRGNEK) shows a compositional bias: basic and acidic residues.

In Homo sapiens (Human), this protein is Putative GED domain-containing protein DNM1P46 (DNM1P46).